The sequence spans 516 residues: ADP-ribosylation factor GTPase-activating protein 3 (516 aa).

An Arf-GAP domain is found at 10-126 (LTIFKRLRSV…IKSLASQATR (117 aa)). The segment at 25–48 (CFDCGAKNPSWASITYGVFLCIDC) adopts a C4-type zinc-finger fold. Positions 170–199 (AEPSSLTSRPVETTLENNEGGQEQGPSVEG) are disordered. Positions 173–194 (SSLTSRPVETTLENNEGGQEQG) are enriched in polar residues. Ser231 is modified (phosphoserine). Positions 243–264 (NEIEKQAQAADKMKEQEDLAKA) form a coiled coil. 4 positions are modified to phosphoserine: Ser270, Ser274, Ser331, and Ser370. The tract at residues 392–414 (KTTGYSDRPTARRKPDYEPVENT) is disordered. Residues Ser428, Ser451, Ser453, Ser455, Ser457, and Ser458 each carry the phosphoserine modification.

It is found in the cytoplasm. It localises to the golgi apparatus membrane. With respect to regulation, GAP activity stimulated by phosphatidylinositol 4,5-bisphosphate (PIP2). In terms of biological role, GTPase-activating protein (GAP) for ADP ribosylation factor 1 (ARF1). Hydrolysis of ARF1-bound GTP may lead to dissociation of coatomer from Golgi-derived membranes to allow fusion with target membranes. This is ADP-ribosylation factor GTPase-activating protein 3 from Macaca fascicularis (Crab-eating macaque).